We begin with the raw amino-acid sequence, 218 residues long: Ras-related protein Rab-11B (218 aa).

Position 2 is an N-acetylglycine (glycine 2). Positions 20, 21, 23, 24, 25, 26, 37, 38, 40, 42, and 43 each coordinate GTP. Mg(2+) is bound at residue serine 25. Residues 36-47 (FNLESKSTIGVE) carry the Switch 1 motif. Mg(2+) is bound by residues threonine 43 and aspartate 66. The short motif at 67–86 (TAGQERYRAITSAYYRGAVG) is the Switch 2 element. GTP-binding residues include glycine 69, asparagine 124, lysine 125, aspartate 127, alanine 155, and leucine 156. Residues 183–218 (DRSAHDESPGNNVVDISVPPTTDGQKSNKLQCCQNM) form a disordered region. Positions 201-218 (PPTTDGQKSNKLQCCQNM) are enriched in polar residues. Residues cysteine 214 and cysteine 215 are each lipidated (S-geranylgeranyl cysteine). The residue at position 215 (cysteine 215) is a Cysteine methyl ester. The propeptide at 216–218 (QNM) is removed in mature form.

It belongs to the small GTPase superfamily. Rab family. It depends on Mg(2+) as a cofactor.

The protein resides in the recycling endosome membrane. The protein localises to the cytoplasmic vesicle. It localises to the secretory vesicle. It is found in the synaptic vesicle membrane. Its subcellular location is the phagosome membrane. It catalyses the reaction GTP + H2O = GDP + phosphate + H(+). With respect to regulation, regulated by guanine nucleotide exchange factors (GEFs) which promote the exchange of bound GDP for free GTP. Regulated by GTPase activating proteins (GAPs) which increase the GTP hydrolysis activity. Inhibited by GDP dissociation inhibitors (GDIs) which prevent Rab-GDP dissociation. Its function is as follows. The small GTPases Rab are key regulators of intracellular membrane trafficking, from the formation of transport vesicles to their fusion with membranes. Rabs cycle between an inactive GDP-bound form and an active GTP-bound form that is able to recruit to membranes different set of downstream effectors directly responsible for vesicle formation, movement, tethering and fusion. That Rab plays a role in endocytic recycling, regulating apical recycling of several transmembrane proteins including cystic fibrosis transmembrane conductance regulator/CFTR, epithelial sodium channel/ENaC, potassium voltage-gated channel, and voltage-dependent L-type calcium channel. May also regulate constitutive and regulated secretion, like insulin granule exocytosis. Required for melanosome transport and release from melanocytes. Also regulates V-ATPase intracellular transport in response to extracellular acidosis. This is Ras-related protein Rab-11B from Diplobatis ommata (Ocellated electric ray).